A 296-amino-acid chain; its full sequence is Phosphoribosylaminoimidazole-succinocarboxamide synthase (296 aa).

The protein belongs to the SAICAR synthetase family.

The enzyme catalyses 5-amino-1-(5-phospho-D-ribosyl)imidazole-4-carboxylate + L-aspartate + ATP = (2S)-2-[5-amino-1-(5-phospho-beta-D-ribosyl)imidazole-4-carboxamido]succinate + ADP + phosphate + 2 H(+). It participates in purine metabolism; IMP biosynthesis via de novo pathway; 5-amino-1-(5-phospho-D-ribosyl)imidazole-4-carboxamide from 5-amino-1-(5-phospho-D-ribosyl)imidazole-4-carboxylate: step 1/2. This is Phosphoribosylaminoimidazole-succinocarboxamide synthase from Thioalkalivibrio sulfidiphilus (strain HL-EbGR7).